Consider the following 88-residue polypeptide: Apolipoprotein C-I (88 aa).

An N-terminal signal peptide occupies residues M1–A26.

It belongs to the apolipoprotein C1 family.

It localises to the secreted. Inhibitor of lipoprotein binding to the low density lipoprotein (LDL) receptor, LDL receptor-related protein, and very low density lipoprotein (VLDL) receptor. Associates with high density lipoproteins (HDL) and the triacylglycerol-rich lipoproteins in the plasma and makes up about 10% of the protein of the VLDL and 2% of that of HDL. Appears to interfere directly with fatty acid uptake and is also the major plasma inhibitor of cholesteryl ester transfer protein (CETP). Modulates the interaction of APOE with beta-migrating VLDL and inhibits binding of beta-VLDL to the LDL receptor-related protein. Binds free fatty acids and reduces their intracellular esterification. The sequence is that of Apolipoprotein C-I (APOC1) from Myodes glareolus (Bank vole).